We begin with the raw amino-acid sequence, 287 residues long: Bifunctional protein FolD (287 aa).

NADP(+)-binding positions include 169–171 and Ser-194; that span reads GRS.

It belongs to the tetrahydrofolate dehydrogenase/cyclohydrolase family. As to quaternary structure, homodimer.

The catalysed reaction is (6R)-5,10-methylene-5,6,7,8-tetrahydrofolate + NADP(+) = (6R)-5,10-methenyltetrahydrofolate + NADPH. It carries out the reaction (6R)-5,10-methenyltetrahydrofolate + H2O = (6R)-10-formyltetrahydrofolate + H(+). Its pathway is one-carbon metabolism; tetrahydrofolate interconversion. In terms of biological role, catalyzes the oxidation of 5,10-methylenetetrahydrofolate to 5,10-methenyltetrahydrofolate and then the hydrolysis of 5,10-methenyltetrahydrofolate to 10-formyltetrahydrofolate. In Albidiferax ferrireducens (strain ATCC BAA-621 / DSM 15236 / T118) (Rhodoferax ferrireducens), this protein is Bifunctional protein FolD.